A 712-amino-acid polypeptide reads, in one-letter code: Ribosomal RNA large subunit methyltransferase K/L (712 aa).

Residues 46–157 enclose the THUMP domain; sequence GAYQALLHSR…REKLIVSLDL (112 aa).

Belongs to the methyltransferase superfamily. RlmKL family.

Its subcellular location is the cytoplasm. It carries out the reaction guanosine(2445) in 23S rRNA + S-adenosyl-L-methionine = N(2)-methylguanosine(2445) in 23S rRNA + S-adenosyl-L-homocysteine + H(+). The catalysed reaction is guanosine(2069) in 23S rRNA + S-adenosyl-L-methionine = N(2)-methylguanosine(2069) in 23S rRNA + S-adenosyl-L-homocysteine + H(+). Its function is as follows. Specifically methylates the guanine in position 2445 (m2G2445) and the guanine in position 2069 (m7G2069) of 23S rRNA. This chain is Ribosomal RNA large subunit methyltransferase K/L, found in Haemophilus ducreyi (strain 35000HP / ATCC 700724).